A 490-amino-acid chain; its full sequence is N-succinylglutamate 5-semialdehyde dehydrogenase (490 aa).

Residue 223–228 coordinates NAD(+); the sequence is GSSRTG. Catalysis depends on residues Glu-246 and Cys-280.

This sequence belongs to the aldehyde dehydrogenase family. AstD subfamily.

It carries out the reaction N-succinyl-L-glutamate 5-semialdehyde + NAD(+) + H2O = N-succinyl-L-glutamate + NADH + 2 H(+). It functions in the pathway amino-acid degradation; L-arginine degradation via AST pathway; L-glutamate and succinate from L-arginine: step 4/5. Catalyzes the NAD-dependent reduction of succinylglutamate semialdehyde into succinylglutamate. The chain is N-succinylglutamate 5-semialdehyde dehydrogenase from Pseudoalteromonas atlantica (strain T6c / ATCC BAA-1087).